Here is a 1462-residue protein sequence, read N- to C-terminus: Gag-Pro-Pol polyprotein (1462 aa).

Gly-2 carries N-myristoyl glycine; by host lipidation. Positions 93-143 are disordered; the sequence is QIPSHPAPPPPSSPTHDPPDSDPQIPPPYVEPTAPQVLPVMHPHGVPPTHR. The residue at position 105 (Ser-105) is a Phosphoserine; by host MAPK1. The PPXY motif motif lies at 118-121; the sequence is PPPY. Positions 124 to 127 match the PTAP/PSAP motif motif; sequence PTAP. CCHC-type zinc fingers lie at residues 355–372 and 378–395; these read QPCF…DCAQ and GPCP…DCPR. Residues 476–554 enclose the Peptidase A2 domain; the sequence is IEALLDTGAD…NNWAIIGRDA (79 aa). Catalysis depends on Asp-481, which acts as the For protease activity; shared with dimeric partner. Positions 614–804 constitute a Reverse transcriptase domain; the sequence is LEAGHIEPYT…GTIKFLGQII (191 aa). Mg(2+) contacts are provided by Asp-680, Asp-755, Asp-756, Asp-1040, Glu-1074, Asp-1096, Asp-1157, Asp-1230, and Asp-1287. The region spanning 1031–1165 is the RNase H type-1 domain; the sequence is INTAPCLFSD…TDALLITPIL (135 aa). An Integrase catalytic domain is found at 1219 to 1388; it reads RGLLPNHIWQ…QPIPETHSLI (170 aa). A DNA-binding region (integrase-type) is located at residues 1393–1443; the sequence is HWYYFKLPGLNSRQWKGPQEALQEAAGAALIPVSANSAQWIPWRLLKQAAC.

In terms of assembly, homodimer; the homodimers are part of the immature particles. Interacts with human TSG101 and NEDD4; these interactions are essential for budding and release of viral particles. As to quaternary structure, homodimer; further assembles as homohexamers. Requires Mg(2+) as cofactor. Phosphorylation of the matrix protein p19 by MAPK1 seems to play a role in budding. Post-translationally, myristoylated. Myristoylation of the matrix (MA) domain mediates the transport and binding of Gag polyproteins to the host plasma membrane and is required for the assembly of viral particles. In terms of processing, specific enzymatic cleavages by the viral protease yield mature proteins. The polyprotein is cleaved during and after budding, this process is termed maturation. The protease is autoproteolytically processed at its N- and C-termini.

The protein resides in the virion. It catalyses the reaction Endonucleolytic cleavage to 5'-phosphomonoester.. The catalysed reaction is DNA(n) + a 2'-deoxyribonucleoside 5'-triphosphate = DNA(n+1) + diphosphate. Its function is as follows. The matrix domain targets Gag, Gag-Pro and Gag-Pro-Pol polyproteins to the plasma membrane via a multipartite membrane binding signal, that includes its myristoylated N-terminus. In terms of biological role, matrix protein. Functionally, forms the spherical core of the virus that encapsulates the genomic RNA-nucleocapsid complex. Binds strongly to viral nucleic acids and promote their aggregation. Also destabilizes the nucleic acids duplexes via highly structured zinc-binding motifs. Its function is as follows. The aspartyl protease mediates proteolytic cleavages of Gag and Gag-Pol polyproteins during or shortly after the release of the virion from the plasma membrane. Cleavages take place as an ordered, step-wise cascade to yield mature proteins. This process is called maturation. Displays maximal activity during the budding process just prior to particle release from the cell (Potential). Cleaves the translation initiation factor eIF4G leading to the inhibition of host cap-dependent translation. In terms of biological role, RT is a multifunctional enzyme that converts the viral RNA genome into dsDNA in the cytoplasm, shortly after virus entry into the cell. This enzyme displays a DNA polymerase activity that can copy either DNA or RNA templates, and a ribonuclease H (RNase H) activity that cleaves the RNA strand of RNA-DNA heteroduplexes in a partially processive 3' to 5'-endonucleasic mode. Conversion of viral genomic RNA into dsDNA requires many steps. A tRNA-Pro binds to the primer-binding site (PBS) situated at the 5'-end of the viral RNA. RT uses the 3' end of the tRNA primer to perform a short round of RNA-dependent minus-strand DNA synthesis. The reading proceeds through the U5 region and ends after the repeated (R) region which is present at both ends of viral RNA. The portion of the RNA-DNA heteroduplex is digested by the RNase H, resulting in a ssDNA product attached to the tRNA primer. This ssDNA/tRNA hybridizes with the identical R region situated at the 3' end of viral RNA. This template exchange, known as minus-strand DNA strong stop transfer, can be either intra- or intermolecular. RT uses the 3' end of this newly synthesized short ssDNA to perform the RNA-dependent minus-strand DNA synthesis of the whole template. RNase H digests the RNA template except for a polypurine tract (PPT) situated at the 5' end of the genome. It is not clear if both polymerase and RNase H activities are simultaneous. RNase H probably can proceed both in a polymerase-dependent (RNA cut into small fragments by the same RT performing DNA synthesis) and a polymerase-independent mode (cleavage of remaining RNA fragments by free RTs). Secondly, RT performs DNA-directed plus-strand DNA synthesis using the PPT that has not been removed by RNase H as primer. PPT and tRNA primers are then removed by RNase H. The 3' and 5' ssDNA PBS regions hybridize to form a circular dsDNA intermediate. Strand displacement synthesis by RT to the PBS and PPT ends produces a blunt ended, linear dsDNA copy of the viral genome that includes long terminal repeats (LTRs) at both ends. Functionally, catalyzes viral DNA integration into the host chromosome, by performing a series of DNA cutting and joining reactions. This is Gag-Pro-Pol polyprotein (gag-pro-pol) from Homo sapiens (Human).